A 1024-amino-acid polypeptide reads, in one-letter code: MPSISHKPITAKLVAAPDATKLELSSYLYQQLFSDKPAEPYVAFEAPGIKWALYPASEDRSLPQYTCKADIRHVAGSLKKFMPVVLKRVNPVTIEHAIVTVPASQYETLNTPEQVLKALEPQLDKDRPVIRQGDVLLNGCRVRLCEPVNQGKVVKGTTKLTVAKEQETIQPADEAADVAFDIAEFLDFDTSVAKTRESTNLQVAPLEGAIPTPLSDRFDDCESRGFVKSETMSKLGVFSGDIVSIKTKNGAERVLRLFAYPEPNTVKYDVVYVSPILYHNIGDKEIEVTPNGETHKSVGEALDSVLEAAEEVKLARVLGPTTTDRTFQTAYHAGLQAYFKPVKRAVRVGDLIPIPFDSILARTIGEDPEMSHIPLEALAVKPDSVAWFQVTSLNGSEDPASKQYLVDSSQTKLIEGGTTSSAVIPTSVPWREYLGLDTLPKFGSEFAYADKIRNLVQISTSALSHAKLNTSVLLHSAKRGVGKSTVLRSVAAQCGISVFEISCFGLIGDNEAQTLGTLRAKLDRAYGCSPCVVVLQHLESIAKKSDQDGKDEGIVSKLVDVLADYSGHGVLLAATSNDPDKISEAIRSRFQFEIEIGVPSEPQRRQIFSHLTKSGPGGDSIRNAPISLRSDVSVENLALQSAGLTPPDLTAIVQTTRLRAIDRLNKLTKDSDTTLDDLLTLSHGTLQLTPSDFDDAIADARQKYSDSIGAPRIPNVGWDDVGGMEGVKKDILDTIETPLKYPHWFSDGVKKRSGILFYGPPGTGKTLLAKAIATTFSLNFFSVKGPELLNMYIGESEANVRRVFQKARDAKPCVVFFDELDSVAPQRGNQGDSGGVMDRIVSQLLAELDGMSTAGGEGVFVVGATNRPDLLDEALLRPGRFDKMLYLGISDTHEKQQTIMEALTRKFRLAADVSLEAISKRCPFTFTGADFYALCSDAMLNAMTRTANEVDAKIKLLNKNREEAGEEPVSIRWWFDHEATKSDIEVEVAQQDFEKAKDELSPSVSAEELQHYLKLRQQFEGGKK.

759–766 (GPPGTGKT) is an ATP binding site.

It belongs to the AAA ATPase family. In terms of assembly, interacts with PEX1; forming the PEX1-PEX6 AAA ATPase complex, which is composed of a heterohexamer formed by a trimer of PEX1-PEX6 dimers.

It is found in the cytoplasm. The protein resides in the cytosol. Its subcellular location is the peroxisome membrane. It carries out the reaction ATP + H2O = ADP + phosphate + H(+). In terms of biological role, component of the PEX1-PEX6 AAA ATPase complex, a protein dislocase complex that mediates the ATP-dependent extraction of the PEX5 receptor from peroxisomal membranes, an essential step for PEX5 recycling. Specifically recognizes PEX5 monoubiquitinated at 'Cys-6', and pulls it out of the peroxisome lumen through the PEX2-PEX10-PEX12 retrotranslocation channel. Extraction by the PEX1-PEX6 AAA ATPase complex is accompanied by unfolding of the TPR repeats and release of bound cargo from PEX5. This chain is Peroxisomal ATPase PEX6 (PEX6), found in Yarrowia lipolytica (strain CLIB 122 / E 150) (Yeast).